Reading from the N-terminus, the 149-residue chain is UPAR/Ly6 domain-containing protein bou (149 aa).

Positions M1–G31 are cleaved as a signal peptide. Over I32–A126 the chain is Extracellular. Cystine bridges form between C34-C74, C37-C48, C65-C91, C100-C115, and C119-C124. N64 is a glycosylation site (N-linked (GlcNAc...) asparagine). The GPI-anchor amidated asparagine moiety is linked to residue N125. A propeptide spans A126–H149 (removed in mature form). A helical transmembrane segment spans residues A127–L147. The Cytoplasmic portion of the chain corresponds to R148 to H149.

In terms of processing, GPI-anchored.

It is found in the cell membrane. The protein resides in the cell junction. Its subcellular location is the septate junction. The protein localises to the cytoplasm. It localises to the cell cortex. It is found in the secreted. The protein resides in the apicolateral cell membrane. Functionally, involved in tracheal paracellular barrier functions mediated by epithelial cell septate junctions. Involved in paracellular barrier functions mediated by glial cell septate junctions in the peripheral nervous system, including the chordotonal organs, but not the hemolymph-brain barrier (the insect blood-brain barrier) of the central nervous system. Required for septate junction assembly, possibly by organizing the preassembly and transport of septate junction proteins such as dlg1/disks large 1, Nrx-IV/Neurexin-IV and the claudin protein kune. Involved in chitin fiber organization during tracheal development. Secreted, possibly in association with extracellular vesicles, to act non-autonomously on tissues distant from its site of expression. The protein is UPAR/Ly6 domain-containing protein bou of Drosophila melanogaster (Fruit fly).